The primary structure comprises 360 residues: NAD(P)H-quinone oxidoreductase subunit 1, chloroplastic (360 aa).

The next 9 helical transmembrane spans lie at 27 to 47 (IWIFVPIFSLVLGIITGVLVI), 98 to 118 (FSIGPSIAVISILLSYSVIPF), 129 to 149 (IGIFLWIAISSIAPIGLLMSG), 165 to 185 (AAQSISYEIPLTLCVLSISLL), 203 to 223 (FWGWNLWRQPIGFIIFLISSL), 248 to 268 (YSGIKFGLFYVASYLNLLISS), 269 to 289 (LFVTVLYLGGWNISIPYISIL), 297 to 317 (IFGTTICIFITLAKTYLFLFI), and 340 to 360 (FLLPISLGNLLLTTSFQLFSL).

It belongs to the complex I subunit 1 family. As to quaternary structure, NDH is composed of at least 16 different subunits, 5 of which are encoded in the nucleus.

Its subcellular location is the plastid. It is found in the chloroplast thylakoid membrane. The catalysed reaction is a plastoquinone + NADH + (n+1) H(+)(in) = a plastoquinol + NAD(+) + n H(+)(out). It carries out the reaction a plastoquinone + NADPH + (n+1) H(+)(in) = a plastoquinol + NADP(+) + n H(+)(out). Its function is as follows. NDH shuttles electrons from NAD(P)H:plastoquinone, via FMN and iron-sulfur (Fe-S) centers, to quinones in the photosynthetic chain and possibly in a chloroplast respiratory chain. The immediate electron acceptor for the enzyme in this species is believed to be plastoquinone. Couples the redox reaction to proton translocation, and thus conserves the redox energy in a proton gradient. The sequence is that of NAD(P)H-quinone oxidoreductase subunit 1, chloroplastic from Olimarabidopsis pumila (Dwarf rocket).